The sequence spans 343 residues: Dihydroorotase (343 aa).

Histidine 13 and histidine 15 together coordinate Zn(2+). Substrate contacts are provided by residues 15 to 17 and asparagine 41; that span reads HLR. Lysine 99, histidine 136, and histidine 174 together coordinate Zn(2+). Lysine 99 is subject to N6-carboxylysine. Histidine 136 is a binding site for substrate. A substrate-binding site is contributed by leucine 219. A Zn(2+)-binding site is contributed by aspartate 247. The active site involves aspartate 247. Substrate is bound by residues histidine 251 and alanine 263.

The protein belongs to the metallo-dependent hydrolases superfamily. DHOase family. Class II DHOase subfamily. Homodimer. It depends on Zn(2+) as a cofactor.

It carries out the reaction (S)-dihydroorotate + H2O = N-carbamoyl-L-aspartate + H(+). It functions in the pathway pyrimidine metabolism; UMP biosynthesis via de novo pathway; (S)-dihydroorotate from bicarbonate: step 3/3. Catalyzes the reversible cyclization of carbamoyl aspartate to dihydroorotate. This is Dihydroorotase from Shewanella baltica (strain OS223).